Consider the following 242-residue polypeptide: Type III pantothenate kinase (242 aa).

7–14 (DLGNSRFK) contacts ATP. Residues Tyr-91 and 98-101 (GVDR) contribute to the substrate site. The Proton acceptor role is filled by Asp-100. ATP is bound at residue Thr-121. Substrate is bound at residue Thr-171.

Belongs to the type III pantothenate kinase family. As to quaternary structure, homodimer. NH4(+) serves as cofactor. It depends on K(+) as a cofactor.

The protein localises to the cytoplasm. It carries out the reaction (R)-pantothenate + ATP = (R)-4'-phosphopantothenate + ADP + H(+). The protein operates within cofactor biosynthesis; coenzyme A biosynthesis; CoA from (R)-pantothenate: step 1/5. Catalyzes the phosphorylation of pantothenate (Pan), the first step in CoA biosynthesis. In Xanthomonas euvesicatoria pv. vesicatoria (strain 85-10) (Xanthomonas campestris pv. vesicatoria), this protein is Type III pantothenate kinase.